The sequence spans 418 residues: Inner capsid protein sigma-2 (418 aa).

Belongs to the orthoreovirus sigma-1 protein family. As to quaternary structure, interacts with protein mu-NS; in viral inclusions.

The protein localises to the virion. Its function is as follows. Inner capsid (core) component. This chain is Inner capsid protein sigma-2 (S2), found in Mammalia (T2J).